Consider the following 21-residue polypeptide: Large ribosomal subunit protein uL29 (21 aa).

The protein belongs to the universal ribosomal protein uL29 family.

In Brevundimonas diminuta (Pseudomonas diminuta), this protein is Large ribosomal subunit protein uL29 (rpmC).